Consider the following 460-residue polypeptide: Probable argininosuccinate lyase (460 aa).

Residues Ser-26, Asn-114, and Thr-159 each coordinate 2-(N(omega)-L-arginino)succinate. Residue His-160 is the Proton acceptor of the active site. Ser-281 (proton donor) is an active-site residue. Asn-289, Tyr-321, Gln-326, and Lys-329 together coordinate 2-(N(omega)-L-arginino)succinate.

It belongs to the lyase 1 family. Argininosuccinate lyase subfamily. In terms of assembly, homotetramer.

It carries out the reaction 2-(N(omega)-L-arginino)succinate = fumarate + L-arginine. The protein operates within amino-acid biosynthesis; L-arginine biosynthesis; L-arginine from L-ornithine and carbamoyl phosphate: step 3/3. The sequence is that of Probable argininosuccinate lyase (argx) from Schizosaccharomyces pombe (strain 972 / ATCC 24843) (Fission yeast).